The chain runs to 27 residues: Toxin Bcg III 21.00 (27 aa).

The protein resides in the secreted. It is found in the nematocyst. Its function is as follows. Possible voltage-gated potassium channel (Kv) blocker. This Bunodosoma cangicum (Sea anemone) protein is Toxin Bcg III 21.00.